Here is a 675-residue protein sequence, read N- to C-terminus: Methionine--tRNA ligase (675 aa).

The short motif at 15-25 (PYANGSIHLGH) is the 'HIGH' region element. 4 residues coordinate Zn(2+): Cys146, Cys149, Cys159, and Cys162. Positions 332 to 336 (KMSKS) match the 'KMSKS' region motif. Lys335 contributes to the ATP binding site. The 103-residue stretch at 573-675 (DFAKVDMRIA…SGAQPGMQVK (103 aa)) folds into the tRNA-binding domain.

This sequence belongs to the class-I aminoacyl-tRNA synthetase family. MetG type 1 subfamily. In terms of assembly, homodimer. Zn(2+) serves as cofactor.

It localises to the cytoplasm. It carries out the reaction tRNA(Met) + L-methionine + ATP = L-methionyl-tRNA(Met) + AMP + diphosphate. Its function is as follows. Is required not only for elongation of protein synthesis but also for the initiation of all mRNA translation through initiator tRNA(fMet) aminoacylation. The protein is Methionine--tRNA ligase of Yersinia pseudotuberculosis serotype O:1b (strain IP 31758).